The following is a 261-amino-acid chain: Flagellar L-ring protein (261 aa).

An N-terminal signal peptide occupies residues 1–15; it reads MKRLLCLLLLTTLTG. Cys-16 carries N-palmitoyl cysteine lipidation. Cys-16 carries the S-diacylglycerol cysteine lipid modification. Residues 121 to 133 show a composition bias toward basic and acidic residues; the sequence is KSADAELSKKNDS. Residues 121-140 form a disordered region; the sequence is KSADAELSKKNDSSMDPLQV.

It belongs to the FlgH family. In terms of assembly, the basal body constitutes a major portion of the flagellar organelle and consists of four rings (L,P,S, and M) mounted on a central rod.

Its subcellular location is the cell outer membrane. The protein resides in the bacterial flagellum basal body. Functionally, assembles around the rod to form the L-ring and probably protects the motor/basal body from shearing forces during rotation. The chain is Flagellar L-ring protein from Aliivibrio salmonicida (strain LFI1238) (Vibrio salmonicida (strain LFI1238)).